Consider the following 165-residue polypeptide: NADPH-dependent 7-cyano-7-deazaguanine reductase (165 aa).

The active-site Thioimide intermediate is Cys56. The active-site Proton donor is Asp63. Substrate-binding positions include 78–80 and 97–98; these read VES and HE.

Belongs to the GTP cyclohydrolase I family. QueF type 1 subfamily.

The protein resides in the cytoplasm. The enzyme catalyses 7-aminomethyl-7-carbaguanine + 2 NADP(+) = 7-cyano-7-deazaguanine + 2 NADPH + 3 H(+). It participates in tRNA modification; tRNA-queuosine biosynthesis. Catalyzes the NADPH-dependent reduction of 7-cyano-7-deazaguanine (preQ0) to 7-aminomethyl-7-deazaguanine (preQ1). This is NADPH-dependent 7-cyano-7-deazaguanine reductase from Oceanobacillus iheyensis (strain DSM 14371 / CIP 107618 / JCM 11309 / KCTC 3954 / HTE831).